Consider the following 471-residue polypeptide: MEYLPLFADLRRRPVLVVGGGEVAARKIQLLMRAGAQIIVAARALCPALEEIRQAGGLSWLGESFEPAMLDDVFLVIAATDDAALNARVSQCAEQRHLLANVVDDQPYCSFIFPSIIDRAPIVVAISSSGTAPVLARILREKLESILPTFLGPMAAIAGAWRGRVKQRIRSMAGRRRFWEKALNGRFASLMAQGRLEQAEQALEQALNAGPEHGGEVALVGAGPGDSGLLTLRGLQLMQQADVVLYDYLVSPEVLELVRRDAERICAGKRVGEHSMPQQEINRLLVTLAQQGKKVVRLKGGDPFIFGRGGEELQAVATAGIPFQVVSGITAAAGATAYAGIPLTHREHAQSITFITGHLRDGADALDWQALARGRQTLAIYMGVVKAAEISSQLIRHGRSAQTPVAVISRGTCSDQYVQTGTLEALDQLAQKAPTPALVVIGEVVALHHEINWFGQQNLAAQKRASVVNLA.

A precorrin-2 dehydrogenase /sirohydrochlorin ferrochelatase region spans residues 1–203 (MEYLPLFADL…GRLEQAEQAL (203 aa)). NAD(+)-binding positions include 22–23 (EV) and 43–44 (RA). Residue Ser128 is modified to Phosphoserine. Positions 215–471 (GEVALVGAGP…QKRASVVNLA (257 aa)) are uroporphyrinogen-III C-methyltransferase. Pro224 contacts S-adenosyl-L-methionine. The Proton acceptor role is filled by Asp247. Lys269 functions as the Proton donor in the catalytic mechanism. S-adenosyl-L-methionine-binding positions include 300–302 (GGD), Ile305, 330–331 (TA), Met382, and Gly411.

It in the N-terminal section; belongs to the precorrin-2 dehydrogenase / sirohydrochlorin ferrochelatase family. In the C-terminal section; belongs to the precorrin methyltransferase family.

It carries out the reaction uroporphyrinogen III + 2 S-adenosyl-L-methionine = precorrin-2 + 2 S-adenosyl-L-homocysteine + H(+). It catalyses the reaction precorrin-2 + NAD(+) = sirohydrochlorin + NADH + 2 H(+). The enzyme catalyses siroheme + 2 H(+) = sirohydrochlorin + Fe(2+). The protein operates within cofactor biosynthesis; adenosylcobalamin biosynthesis; precorrin-2 from uroporphyrinogen III: step 1/1. It participates in cofactor biosynthesis; adenosylcobalamin biosynthesis; sirohydrochlorin from precorrin-2: step 1/1. It functions in the pathway porphyrin-containing compound metabolism; siroheme biosynthesis; precorrin-2 from uroporphyrinogen III: step 1/1. Its pathway is porphyrin-containing compound metabolism; siroheme biosynthesis; siroheme from sirohydrochlorin: step 1/1. The protein operates within porphyrin-containing compound metabolism; siroheme biosynthesis; sirohydrochlorin from precorrin-2: step 1/1. Its function is as follows. Multifunctional enzyme that catalyzes the SAM-dependent methylations of uroporphyrinogen III at position C-2 and C-7 to form precorrin-2 via precorrin-1. Then it catalyzes the NAD-dependent ring dehydrogenation of precorrin-2 to yield sirohydrochlorin. Finally, it catalyzes the ferrochelation of sirohydrochlorin to yield siroheme. In Sodalis glossinidius (strain morsitans), this protein is Siroheme synthase.